Here is a 438-residue protein sequence, read N- to C-terminus: Gamma-glutamyl phosphate reductase (438 aa).

This sequence belongs to the gamma-glutamyl phosphate reductase family.

It localises to the cytoplasm. The catalysed reaction is L-glutamate 5-semialdehyde + phosphate + NADP(+) = L-glutamyl 5-phosphate + NADPH + H(+). Its pathway is amino-acid biosynthesis; L-proline biosynthesis; L-glutamate 5-semialdehyde from L-glutamate: step 2/2. Catalyzes the NADPH-dependent reduction of L-glutamate 5-phosphate into L-glutamate 5-semialdehyde and phosphate. The product spontaneously undergoes cyclization to form 1-pyrroline-5-carboxylate. The chain is Gamma-glutamyl phosphate reductase from Natronomonas pharaonis (strain ATCC 35678 / DSM 2160 / CIP 103997 / JCM 8858 / NBRC 14720 / NCIMB 2260 / Gabara) (Halobacterium pharaonis).